The following is a 776-amino-acid chain: Chitin synthase 1 (776 aa).

Helical transmembrane passes span 451–471, 487–507, 523–543, 558–578, 695–714, and 723–743; these read LVSL…FYFL, FWIF…LFIV, LIIL…VFVI, VLVS…LMSI, VVLF…VQVY, and IYLA…AIGS.

This sequence belongs to the chitin synthase family.

Its subcellular location is the cell membrane. It carries out the reaction [(1-&gt;4)-N-acetyl-beta-D-glucosaminyl](n) + UDP-N-acetyl-alpha-D-glucosamine = [(1-&gt;4)-N-acetyl-beta-D-glucosaminyl](n+1) + UDP + H(+). Requires proteolytic activation. Functionally, polymerizes chitin, a structural polymer of the cell wall and septum, by transferring the sugar moiety of UDP-GlcNAc to the non-reducing end of the growing chitin polymer. Also involved in forming cross walls in the hyphal phase. This is Chitin synthase 1 (CHS1) from Candida albicans (Yeast).